We begin with the raw amino-acid sequence, 524 residues long: Serine/threonine-protein kinase PAK 2 (524 aa).

Positions 1 to 81 (MSDNGELEDK…PEISPPSDFE (81 aa)) are disordered. S2 carries the post-translational modification N-acetylserine. Phosphoserine is present on residues S2, S20, S55, S58, and S59. T60 is subject to Phosphothreonine. An N6-acetyllysine modification is found at K62. S64 carries the post-translational modification Phosphoserine. Positions 67–81 (KEKERPEISPPSDFE) are enriched in basic and acidic residues. A GTPase-binding region spans residues 69–112 (KERPEISPPSDFEHTIHVGFDAVTGEFTGMPEQWARLLQTSNIT). The segment at 69–137 (KERPEISPPS…KFYDSNTVKQ (69 aa)) is autoregulatory region. Residues 74–87 (ISPPSDFEHTIHVG) form the CRIB domain. The tract at residues 88-248 (FDAVTGEFTG…IVSIGDPKKK (161 aa)) is linker. K128 carries the post-translational modification N6-acetyllysine. The residue at position 134 (T134) is a Phosphothreonine. Y139 carries the post-translational modification Phosphotyrosine. The residue at position 141 (S141) is a Phosphoserine. Positions 142 to 190 (FTPPEKDGFPSGTPALNTKGSETSAVVTEEDDDDEDAAPPVIAPRPDHT) are disordered. T143 bears the Phosphothreonine mark. Phosphoserine is present on S152. A phosphothreonine mark is found at T154, T159, and T169. Over residues 155–167 (PALNTKGSETSAV) the composition is skewed to polar residues. The span at 169–178 (TEEDDDDEDA) shows a compositional bias: acidic residues. Residue S197 is modified to Phosphoserine. Residues 204-228 (APVGDSNVDSGAKSSDKQKKKAKMT) are disordered. The short motif at 245 to 251 (PKKKYTR) is the Nuclear localization signal element. The Protein kinase domain occupies 249–500 (YTRYEKIGQG…AKELLQHPFL (252 aa)). Residues 255 to 263 (IGQGASGTV) and K278 each bind ATP. D368 (proton acceptor) is an active-site residue. The residue at position 402 (T402) is a Phosphothreonine; by autocatalysis.

Belongs to the protein kinase superfamily. STE Ser/Thr protein kinase family. STE20 subfamily. As to quaternary structure, interacts tightly with GTP-bound but not GDP-bound CDC42/p21 and RAC1. Interacts with SH3MD4. Interacts with SCRIB. Interacts with ARHGEF7 and GIT1. PAK-2p34 interacts with ARHGAP10. Interacts with RAC1. Post-translationally, full-length PAK2 is autophosphorylated when activated by CDC42/p21. Following cleavage, both peptides, PAK-2p27 and PAK-2p34, become highly autophosphorylated. Autophosphorylation of PAK-2p27 can occur in the absence of any effectors and is dependent on phosphorylation of Thr-402, because PAK-2p27 is acting as an exogenous substrate. During apoptosis proteolytically cleaved by caspase-3 or caspase-3-like proteases to yield active PAK-2p34. In terms of processing, ubiquitinated, leading to its proteasomal degradation.

The protein localises to the cytoplasm. Its subcellular location is the nucleus. It localises to the perinuclear region. The protein resides in the membrane. The catalysed reaction is L-seryl-[protein] + ATP = O-phospho-L-seryl-[protein] + ADP + H(+). It catalyses the reaction L-threonyl-[protein] + ATP = O-phospho-L-threonyl-[protein] + ADP + H(+). Its activity is regulated as follows. Activated by binding small G proteins. Binding of GTP-bound CDC42 or RAC1 to the autoregulatory region releases monomers from the autoinhibited dimer, enables phosphorylation of Thr-402 and allows the kinase domain to adopt an active structure. Following caspase cleavage, autophosphorylated PAK-2p34 is constitutively active. Its function is as follows. Serine/threonine protein kinase that plays a role in a variety of different signaling pathways including cytoskeleton regulation, cell motility, cell cycle progression, apoptosis or proliferation. Acts as a downstream effector of the small GTPases CDC42 and RAC1. Activation by the binding of active CDC42 and RAC1 results in a conformational change and a subsequent autophosphorylation on several serine and/or threonine residues. Full-length PAK2 stimulates cell survival and cell growth. Phosphorylates MAPK4 and MAPK6 and activates the downstream target MAPKAPK5, a regulator of F-actin polymerization and cell migration. Phosphorylates JUN and plays an important role in EGF-induced cell proliferation. Phosphorylates many other substrates including histone H4 to promote assembly of H3.3 and H4 into nucleosomes, BAD, ribosomal protein S6, or MBP. Phosphorylates CASP7, thereby preventing its activity. Additionally, associates with ARHGEF7 and GIT1 to perform kinase-independent functions such as spindle orientation control during mitosis. On the other hand, apoptotic stimuli such as DNA damage lead to caspase-mediated cleavage of PAK2, generating PAK-2p34, an active p34 fragment that translocates to the nucleus and promotes cellular apoptosis involving the JNK signaling pathway. Caspase-activated PAK2 phosphorylates MKNK1 and reduces cellular translation. The protein is Serine/threonine-protein kinase PAK 2 (Pak2) of Rattus norvegicus (Rat).